We begin with the raw amino-acid sequence, 374 residues long: Putative L-lysine 2,3-aminomutase aq_1632 (374 aa).

The Radical SAM core domain occupies 86–314; that stretch reads HKYPDTALLL…ARVRYVMSHE (229 aa). Positions 100, 104, and 107 each coordinate [4Fe-4S] cluster. Lysine 317 is modified (N6-(pyridoxal phosphate)lysine).

The protein belongs to the radical SAM superfamily. KamA family. [4Fe-4S] cluster serves as cofactor. The cofactor is pyridoxal 5'-phosphate.

The protein is Putative L-lysine 2,3-aminomutase aq_1632 of Aquifex aeolicus (strain VF5).